The sequence spans 142 residues: Large ribosomal subunit protein uL11 (142 aa).

It belongs to the universal ribosomal protein uL11 family. Part of the ribosomal stalk of the 50S ribosomal subunit. Interacts with L10 and the large rRNA to form the base of the stalk. L10 forms an elongated spine to which L12 dimers bind in a sequential fashion forming a multimeric L10(L12)X complex. In terms of processing, one or more lysine residues are methylated.

Functionally, forms part of the ribosomal stalk which helps the ribosome interact with GTP-bound translation factors. This chain is Large ribosomal subunit protein uL11, found in Xylella fastidiosa (strain Temecula1 / ATCC 700964).